We begin with the raw amino-acid sequence, 245 residues long: GDSL esterase/lipase At4g16220 (245 aa).

A signal peptide spans 1–24; sequence MSSLVSRCQVIALLVLFFFGVCLA. The active-site Nucleophile is the S37.

This sequence belongs to the 'GDSL' lipolytic enzyme family.

Its subcellular location is the secreted. The polypeptide is GDSL esterase/lipase At4g16220 (Arabidopsis thaliana (Mouse-ear cress)).